The sequence spans 127 residues: Nitrogenase-stabilizing/protective protein NifW (127 aa).

It belongs to the NifW family. In terms of assembly, homotrimer; associates with NifD.

Its function is as follows. May protect the nitrogenase Fe-Mo protein from oxidative damage. The protein is Nitrogenase-stabilizing/protective protein NifW of Rhizobium etli (strain ATCC 51251 / DSM 11541 / JCM 21823 / NBRC 15573 / CFN 42).